We begin with the raw amino-acid sequence, 229 residues long: Coiled-coil domain-containing protein 134 (229 aa).

A signal peptide spans 1-22 (MDLLQFLAFLFVLLLSGMGATG). Residue asparagine 148 is a short sequence motif, prevents secretion from ER. An N-linked (GlcNAc...) asparagine glycan is attached at asparagine 148. The interval 193–229 (TDPFQKALREEEKRRKKEEKRKEIRKGPRISRSQSEL) is disordered. The stretch at 196-218 (FQKALREEEKRRKKEEKRKEIRK) forms a coiled coil. A Nuclear localization signal motif is present at residues 206–213 (RRKKEEKR).

It belongs to the CCDC134 family. In terms of assembly, interacts with TADA2A. Associates with the PCAF complex via TADA2A binding. O-glycosylated, with additional sialic acid modifications. Expressed in cervical gland, cervical squamous epithelium, endometrium, stomach, kidney distal convoluted tubule, spermatogenic cells in testis, mammary gland, liver and striated muscle (at protein level). Also detected in placenta. Highest expression in testis relative to other tissues. Detected in T cells and dendritic cells; highly expressed in activated CD8(+) T cells, and also expressed at lower levels in CD4(+) T cells.

Its subcellular location is the endoplasmic reticulum lumen. It is found in the secreted. The protein resides in the cytoplasm. The protein localises to the nucleus. Functionally, molecular adapter required to prevent protein hyperglycosylation of HSP90B1: during translation, associates with nascent HSP90B1 and the STT3A catalytic component of the OST-A complex and tethers them to a specialized translocon that forms a microenvironment for HSP90B1 folding. In the CCDC134-containing translocon, STT3A associates with the SRT pseudosubstrate motif of HSP90B1, preventing access to facultative glycosylation sites until folding is completed, preventing hyperglycosylation and subsequent degradation of HSP90B1. In extracellular secreted form, promotes proliferation and activation of CD8(+) T-cells, suggesting a cytokine-like function. May inhibit ERK and JNK signaling activity. May suppress cell migration and invasion activity, via its effects on ERK and JNK signaling. May also localize in the nucleus: enhances stability of the PCAF histone acetyltransferase (HAT) complex member TADA2A and thus promotes PCAF-mediated histone acetyltransferase activity. Has a critical role in the regulation of osteogenesis and bone development. The polypeptide is Coiled-coil domain-containing protein 134 (Homo sapiens (Human)).